The primary structure comprises 229 residues: MSNSLLVCHGLRKIYREAQLETEVLKGVSFAIEPNELVAIVGSSGSGKSTLLHLLGALDEPSDGDVFFKGQKLNSMSANKQAKIRNQEIGFVYQFHHLLADFSAMENVAMPLLIGGMATDKAESKAKSILDMVGLSHRYEHRPSELSGGERQRVAFARALVNNPSIVLADEPTGNLDHKTALEIYDLMCKLNKESGTAFLVVTHDNELAAKLDRCMHMQDGNLVQVEVA.

The ABC transporter domain maps to 9–228 (HGLRKIYREA…QDGNLVQVEV (220 aa)). ATP is bound at residue 42-49 (GSSGSGKS).

This sequence belongs to the ABC transporter superfamily. Lipoprotein translocase (TC 3.A.1.125) family. As to quaternary structure, the complex is composed of two ATP-binding proteins (LolD) and two transmembrane proteins (LolC and LolE).

It localises to the cell inner membrane. Its function is as follows. Part of the ABC transporter complex LolCDE involved in the translocation of mature outer membrane-directed lipoproteins, from the inner membrane to the periplasmic chaperone, LolA. Responsible for the formation of the LolA-lipoprotein complex in an ATP-dependent manner. This is Lipoprotein-releasing system ATP-binding protein LolD from Photobacterium profundum (strain SS9).